The primary structure comprises 432 residues: Glutamyl-tRNA reductase (432 aa).

Residues 49–52 (TCNR), S107, 112–114 (ETQ), and Q118 contribute to the substrate site. Catalysis depends on C50, which acts as the Nucleophile. NADP(+) is bound at residue 186–191 (GAGEMG).

This sequence belongs to the glutamyl-tRNA reductase family. As to quaternary structure, homodimer.

It carries out the reaction (S)-4-amino-5-oxopentanoate + tRNA(Glu) + NADP(+) = L-glutamyl-tRNA(Glu) + NADPH + H(+). Its pathway is porphyrin-containing compound metabolism; protoporphyrin-IX biosynthesis; 5-aminolevulinate from L-glutamyl-tRNA(Glu): step 1/2. Functionally, catalyzes the NADPH-dependent reduction of glutamyl-tRNA(Glu) to glutamate 1-semialdehyde (GSA). The polypeptide is Glutamyl-tRNA reductase (Campylobacter jejuni subsp. doylei (strain ATCC BAA-1458 / RM4099 / 269.97)).